The following is a 218-amino-acid chain: Capsid protein (218 aa).

N-acetylmethionine; by host is present on M1. The disordered stretch occupies residues 1–28 (MDKSESTSAGRNRRRRPRRGSRSAPSSA). Basic residues predominate over residues 11–21 (RNRRRRPRRGS).

It belongs to the cucumovirus capsid protein family.

It is found in the virion. Its function is as follows. Capsid protein. Probably binds RNA and plays a role in packaging. In Cucumis sativus (Cucumber), this protein is Capsid protein.